The sequence spans 1262 residues: Structural maintenance of chromosomes protein 1 (1262 aa).

Residues 171–497 (SRSHEFQAEY…VAVVRQLSEA (327 aa)) adopt a coiled-coil conformation. The 119-residue stretch at 524–642 (SVYGRLVDLC…ESQEDAKQLA (119 aa)) folds into the SMC hinge domain. A coiled-coil region spans residues 680–937 (KKWDEKVVKQ…RLESLLTKKQ (258 aa)). The disordered stretch occupies residues 965–994 (EYEEDDGDDTASQSSQSATDGPSVSEEQIQ). Polar residues predominate over residues 974–991 (TASQSSQSATDGPSVSEE). Residues 1017-1086 (DGVRQMSNRL…QQFEKVKTDR (70 aa)) are a coiled coil. The short motif at 1148 to 1183 (LSGGEKTIAALALLFAVHGRNPAPFFVLDEIDAALD) is the DA-box element.

This sequence belongs to the SMC family. SMC1 subfamily. In terms of assembly, component of the cohesin complex, composed of the smc-1 and smc-3 heterodimer attached via their SMC hinge domain, scc-1 which links them, and scc-3. Interacts with smc-3, scc-1, scc-3 and tim-1.

It is found in the nucleus. The protein resides in the chromosome. Involved in chromosome cohesion during cell cycle and in DNA repair. Required for chromosome segregation during mitosis. Central component of cohesin complex. The cohesin complex is required for the cohesion of sister chromatids after DNA replication. The cohesin complex apparently forms a large proteinaceous ring within which sister chromatids can be trapped. At anaphase, the complex is cleaved and dissociates from chromatin, allowing sister chromatids to segregate. The polypeptide is Structural maintenance of chromosomes protein 1 (Caenorhabditis elegans).